A 568-amino-acid polypeptide reads, in one-letter code: Fumarate hydratase 2 (568 aa).

Residue cysteine 133 participates in [4Fe-4S] cluster binding. (S)-malate contacts are provided by residues 134-135 (QD), arginine 173, glycine 216, and 219-225 (NKAYLYQ). Positions 252 and 346 each coordinate [4Fe-4S] cluster. Residues arginine 421, 467-471 (TTAGR), and lysine 491 contribute to the (S)-malate site.

This sequence belongs to the class-I fumarase family. Homodimer. [4Fe-4S] cluster serves as cofactor.

It is found in the cytoplasm. Its subcellular location is the cytosol. The enzyme catalyses (S)-malate = fumarate + H2O. Its activity is regulated as follows. Specifically and competitively inhibited by 2-thiomalate, which coordinates with the catalytic [4Fe-4S] cluster. Weakly inhibited by malonate. Its function is as follows. Cytosolic fumarate hydratase that catalyzes the reversible hydration of fumarate to (S)-malate. This Leishmania major protein is Fumarate hydratase 2.